The primary structure comprises 385 residues: Transmembrane protein 271 (385 aa).

The next 2 membrane-spanning stretches (helical) occupy residues 9–29 and 50–70; these read CAAL…AVGL and GAFY…AALL. The disordered stretch occupies residues 83 to 111; it reads EPGPGLGVPAAPAGAPEATPGESGAAAGA. The helical transmembrane segment at 121–141 threads the bilayer; the sequence is LLLGVLVFMLGVLSAFAGAVI. The tract at residues 160-203 is disordered; it reads PRAPGSSPGSAPGSTPGSAPGSAPGSAPGSAPGAPRARSTLDSA. Positions 163–197 are enriched in low complexity; sequence PGSSPGSAPGSTPGSAPGSAPGSAPGSAPGAPRAR. A helical transmembrane segment spans residues 219–239; sequence VLSTVFNSLECLLGLLSLLLV. The interval 245–305 is disordered; it reads SQARRGRRGR…SEASILSPEE (61 aa). A compositionally biased stretch (basic residues) spans 246-258; the sequence is QARRGRRGRRRGG. Residues 259–277 show a composition bias toward low complexity; sequence RALARPRGGSGLRAQPPAS. A compositionally biased stretch (basic residues) spans 278–292; that stretch reads RARRGRRGRRGRRLQ.

The protein localises to the membrane. In Homo sapiens (Human), this protein is Transmembrane protein 271.